A 222-amino-acid chain; its full sequence is MPDAVRRCPEDGFFEGDTCPVCDGAGTHILDGARRRQLSKFVSGALRHFPEDAGIEVDKAGWTGFDALRVAVERQYDWADAAALAGVIATDPKGRFERTGVGNEAGITTAGGRVRAAYGHSVDVTLDGTDDPVPATLYHGTAPRNVDSIREAGLKPMSRQTVHLSESAAAAREVGRRHAADPVVFVVDATAMQSDDRRIVKRGTETYTTDRVSPVYLSLLEK.

It belongs to the KptA/TPT1 family.

Removes the 2'-phosphate from RNA via an intermediate in which the phosphate is ADP-ribosylated by NAD followed by a presumed transesterification to release the RNA and generate ADP-ribose 1''-2''-cyclic phosphate (APPR&gt;P). May function as an ADP-ribosylase. In Haloarcula marismortui (strain ATCC 43049 / DSM 3752 / JCM 8966 / VKM B-1809) (Halobacterium marismortui), this protein is Probable RNA 2'-phosphotransferase.